The chain runs to 523 residues: 2-isopropylmalate synthase (523 aa).

The 263-residue stretch at 5-267 (VIIFDTTLRD…ETGINAKEIH (263 aa)) folds into the Pyruvate carboxyltransferase domain. Mn(2+) contacts are provided by D14, H202, H204, and N238. The interval 392 to 523 (ELQQLVVHSD…QQNKQEFGSV (132 aa)) is regulatory domain.

This sequence belongs to the alpha-IPM synthase/homocitrate synthase family. LeuA type 1 subfamily. As to quaternary structure, homodimer. Requires Mn(2+) as cofactor.

The protein localises to the cytoplasm. The catalysed reaction is 3-methyl-2-oxobutanoate + acetyl-CoA + H2O = (2S)-2-isopropylmalate + CoA + H(+). It functions in the pathway amino-acid biosynthesis; L-leucine biosynthesis; L-leucine from 3-methyl-2-oxobutanoate: step 1/4. In terms of biological role, catalyzes the condensation of the acetyl group of acetyl-CoA with 3-methyl-2-oxobutanoate (2-ketoisovalerate) to form 3-carboxy-3-hydroxy-4-methylpentanoate (2-isopropylmalate). The sequence is that of 2-isopropylmalate synthase from Shewanella halifaxensis (strain HAW-EB4).